Consider the following 317-residue polypeptide: DNA-directed RNA polymerase subunit alpha (317 aa).

Residues 1-230 (MIEIEMEKPK…EHLNLFITLT (230 aa)) are alpha N-terminal domain (alpha-NTD). The tract at residues 247 to 317 (KEKVLEMTIE…LGLGLRPSDE (71 aa)) is alpha C-terminal domain (alpha-CTD).

The protein belongs to the RNA polymerase alpha chain family. Homodimer. The RNAP catalytic core consists of 2 alpha, 1 beta, 1 beta' and 1 omega subunit. When a sigma factor is associated with the core the holoenzyme is formed, which can initiate transcription.

The catalysed reaction is RNA(n) + a ribonucleoside 5'-triphosphate = RNA(n+1) + diphosphate. Functionally, DNA-dependent RNA polymerase catalyzes the transcription of DNA into RNA using the four ribonucleoside triphosphates as substrates. The chain is DNA-directed RNA polymerase subunit alpha from Alkaliphilus oremlandii (strain OhILAs) (Clostridium oremlandii (strain OhILAs)).